We begin with the raw amino-acid sequence, 401 residues long: Argininosuccinate synthase (401 aa).

ATP is bound at residue 9-17 (AYSGGLDTS). Tyr-88 lines the L-citrulline pocket. ATP is bound at residue Gly-118. The L-aspartate site is built by Thr-120, Asn-124, and Asp-125. Residue Asn-124 coordinates L-citrulline. Arg-128, Ser-177, Ser-186, Glu-262, and Tyr-274 together coordinate L-citrulline.

This sequence belongs to the argininosuccinate synthase family. Type 1 subfamily. In terms of assembly, homotetramer.

It localises to the cytoplasm. The catalysed reaction is L-citrulline + L-aspartate + ATP = 2-(N(omega)-L-arginino)succinate + AMP + diphosphate + H(+). It functions in the pathway amino-acid biosynthesis; L-arginine biosynthesis; L-arginine from L-ornithine and carbamoyl phosphate: step 2/3. The sequence is that of Argininosuccinate synthase from Chlorobaculum parvum (strain DSM 263 / NCIMB 8327) (Chlorobium vibrioforme subsp. thiosulfatophilum).